The chain runs to 356 residues: GMP reductase (356 aa).

NADP(+) contacts are provided by residues 26–27, Lys78, 132–134, and 183–184; these read SR, DVA, and IG. K(+) contacts are provided by Gly184, Gly186, and Cys189. Cys189 acts as the Thioimidate intermediate in catalysis. Thr191 (proton donor/acceptor) is an active-site residue. Arg192 contacts K(+). Residues 222–224, 245–246, 271–273, and 289–293 contribute to the GMP site; these read DGG, GG, GMS, and RASEG. Residues Met272, 288 to 289, and 317 to 320 contribute to the NADP(+) site; these read YR and SACT.

Belongs to the IMPDH/GMPR family.

It carries out the reaction IMP + NH4(+) + NADP(+) = GMP + NADPH + 2 H(+). Functionally, catalyzes the irreversible NADPH-dependent deamination of GMP to IMP. It functions in the conversion of nucleobase, nucleoside and nucleotide derivatives of G to A nucleotides, and in maintaining the intracellular balance of A and G nucleotides. This chain is GMP reductase, found in Ascaris suum (Pig roundworm).